We begin with the raw amino-acid sequence, 512 residues long: ATP synthase subunit alpha (512 aa).

170-177 (GDRQTGKT) serves as a coordination point for ATP.

It belongs to the ATPase alpha/beta chains family. F-type ATPases have 2 components, CF(1) - the catalytic core - and CF(0) - the membrane proton channel. CF(1) has five subunits: alpha(3), beta(3), gamma(1), delta(1), epsilon(1). CF(0) has three main subunits: a(1), b(2) and c(9-12). The alpha and beta chains form an alternating ring which encloses part of the gamma chain. CF(1) is attached to CF(0) by a central stalk formed by the gamma and epsilon chains, while a peripheral stalk is formed by the delta and b chains.

The protein localises to the cell inner membrane. It carries out the reaction ATP + H2O + 4 H(+)(in) = ADP + phosphate + 5 H(+)(out). In terms of biological role, produces ATP from ADP in the presence of a proton gradient across the membrane. The alpha chain is a regulatory subunit. The sequence is that of ATP synthase subunit alpha from Solibacter usitatus (strain Ellin6076).